The chain runs to 1073 residues: MEGKKKRPLFFLLVLLLSHKANNVLFERMNGILLLECENEYVKNENGYKLATGHHYMDNDQIEQWLQGTDRSRRVKIEENVKYKYNVEELNTKYEQMKAPRINRILKESTYEAQNVADNNYIDDKANGEHKTDNKTNKGEGARNMVMLDYDISGSGQPDGIIDNVVELGTEDEGNFLENSSKGGDHPYRMNRKERMSNGVINQTFLQNNVMDKCNDKRKRGERDWDCPAEKDICISVRRYQLCMKGLTNLVNNTRTHSHNDITFLKLNLKRKLMYDAAVEGDLLLKKNNYQYNKEFCKDIRWGLGDFGDIIMGTNMEGIGYSQVVENNLRQVFGTDEKAKQDRKQWWNESKEHIWRAMMFSIRSRLKEKFVWICKKDVTLKVEPQIYRWIREWGRDYMSKLPKEQGKLNEKCASKLYYNNMAICMLPLCHDACKSYDQWITRKKKQWDVLSTKFSSVKKTQKIGTENIATAYDILKQELNGFKEATFENEINKRDNLYNHLCPCVVEEARKNTQENVKNVGSGVESKAASSNPITEAVKSSSGEGKVQEDSAHKSVNKGEGKSSTNEADPGSQSGAPASRSVDEKAGVPALSAGQGHDKVPPAEAAATESAVLHSADKTPNTVTEENKEGTQMDGAAGGDGKAPGPTVSSDVPSVGGKDSGPSTSASHALAGENGEVHNGTDTEPKEDGEKADPQKDIEVKGKQDTDDRSQGSLGPHTDERATLGETHMEKDTETAGGSTLTPEQNVSVASDNGNVPGSGNKQNEGATALSGAESLKSNESVHKTIDNTTHGLENKNGGNEKDFQKHDFMNNDMLNDQASSDHTSSDQTSSDHTSSDQTSSDHTSSDHTSSDQTSSDQTSSDQTIDTEGHHRDNVRNPEIKSSEDMSKGDFMRNSNSNELYSHNNLNNRKLNRDQYEHRDVKATREKIILMSEVNKCNNRASVKYCNTIEDRMLSSTCSRERRKNLCCSISDFCLNYFELYSYEFYNCMKKEFEDPSYECFTKGSSTGIVYFATGGAFLIILLLFASWNAASNDYEEEATFDEFVEYSDDIHRTPLMPNDIEHMQQFTPLDYS.

The first 21 residues, 1-21 (MEGKKKRPLFFLLVLLLSHKA), serve as a signal peptide directing secretion. Over 22 to 1007 (NNVLFERMNG…YECFTKGSST (986 aa)) the chain is Extracellular. N-linked (GlcNAc...) asparagine glycosylation is found at asparagine 134, asparagine 179, and asparagine 202. 2 cysteine pairs are disulfide-bonded: cysteine 214-cysteine 243 and cysteine 227-cysteine 234. N-linked (GlcNAc...) asparagine glycosylation is found at asparagine 252 and asparagine 348. Intrachain disulfides connect cysteine 297–cysteine 374, cysteine 412–cysteine 429, cysteine 424–cysteine 504, and cysteine 433–cysteine 502. A disordered region spans residues 517 to 915 (VKNVGSGVES…LNNRKLNRDQ (399 aa)). Residues 528–543 (AASSNPITEAVKSSSG) show a composition bias toward polar residues. Over residues 546–561 (KVQEDSAHKSVNKGEG) the composition is skewed to basic and acidic residues. The span at 562-576 (KSSTNEADPGSQSGA) shows a compositional bias: polar residues. Basic and acidic residues-rich tracts occupy residues 675-710 (GEVH…DDRS) and 717-734 (HTDE…KDTE). Asparagine 679 carries N-linked (GlcNAc...) asparagine glycosylation. Residues 736–766 (AGGSTLTPEQNVSVASDNGNVPGSGNKQNEG) show a composition bias toward polar residues. N-linked (GlcNAc...) asparagine glycosylation is found at asparagine 746, asparagine 779, and asparagine 788. A compositionally biased stretch (basic and acidic residues) spans 799-810 (GNEKDFQKHDFM). 2 stretches are compositionally biased toward low complexity: residues 821–843 (SDHT…SSDH) and 851–864 (SDQT…SDQT). Residues 867 to 891 (TEGHHRDNVRNPEIKSSEDMSKGDF) are compositionally biased toward basic and acidic residues. The segment covering 893-909 (RNSNSNELYSHNNLNNR) has biased composition (polar residues). Residues 1008–1029 (GIVYFATGGAFLIILLLFASWN) traverse the membrane as a helical segment. Residues 1030–1073 (AASNDYEEEATFDEFVEYSDDIHRTPLMPNDIEHMQQFTPLDYS) lie on the Cytoplasmic side of the membrane.

Interacts (via region II) with human ACKR1 (via N-terminal extracellular domain). Interacts (via region II) with rhesus macaque ACKR1 (via N-terminal extracellular domain).

It localises to the cell membrane. The protein resides in the cytoplasmic vesicle. Its subcellular location is the secretory vesicle. The protein localises to the microneme. Its function is as follows. Binds to the human erythrocyte Duffy blood group determinant (ACKR1). Binds to the rhesus macaque erythrocyte Duffy blood group determinant (ACKR1). This chain is Duffy receptor alpha form, found in Plasmodium knowlesi.